A 533-amino-acid chain; its full sequence is Tyrosine ammonia-lyase (533 aa).

Catalysis depends on Tyr-57, which acts as the Proton donor/acceptor. His-87 is a substrate binding site. The 5-imidazolinone (Ala-Gly) cross-link spans 146–148; it reads ASG. At Ser-147 the chain carries 2,3-didehydroalanine (Ser). Substrate contacts are provided by Asn-200 and Arg-305.

This sequence belongs to the TAL/TAM family. As to quaternary structure, homotetramer; dimer of dimers. In terms of processing, contains an active site 4-methylidene-imidazol-5-one (MIO), which is formed autocatalytically by cyclization and dehydration of residues Ala-Ser-Gly.

The enzyme catalyses L-tyrosine = (E)-4-coumarate + NH4(+). It catalyses the reaction L-tyrosine = 3-amino-3-(4-hydroxyphenyl)propanoate. Has ammonia-lyase and, to a lesser extent, aminomutase activity. Catalyzes the rearrangement of L-tyrosine to R-beta-tyrosine and S-beta-tyrosine. Does not accept L-histidine or L-phenylalanine as substrates. The polypeptide is Tyrosine ammonia-lyase (Cupriavidus metallidurans (strain ATCC 43123 / DSM 2839 / NBRC 102507 / CH34) (Ralstonia metallidurans)).